A 563-amino-acid chain; its full sequence is MDTKTLIASEIAKVVPELEQDAIFNLLETPKNSDMGDLAFPAFSLAKVLRKAPQMIASELAEQIDESQFEKVVAVGPYINFFLDKAKISSQVLEQVITAGSDYAQQDEGQGRNVAIDMSSPNIAKPFSIGHLRSTVIGDSLAHIFAKMGYQPVKINHLGDWGKQFGMLIVAYKKWGDEAAVQAHPIDELLKLYVRINAEAETDPTVDEEAREWFRKLEDGDKEATELWQWFRDESLLEFNRLYDQLHVTFDSYNGEAFYNDKMDEVLELLEAKNLLVESKGAQVVNLEKYGIEHPALIKKSDGATLYITRDLAAALYRKRTYDFAKSVYVVGNEQAAHFKQLKAVLQEMGYDWSDDMTHVAFGLVTKGGAKLSTRKGNVILLEPTVAEAINRAASQIEAKNPNLADKEAVAHAVGVGAIKFYDLKTDRMNGYDFDLETMVSFEGETGPYVQYAHARIQSILRKADFTPSATTTYSLADAESWEIIKLIQDFPRIIKRTSDNFEPSIMAKFAINLAQSFNKYYAHTRILDDNSERDNRLALCYATATVLKEALRLLGVDAPNEM.

Positions 121–131 match the 'HIGH' region motif; sequence PNIAKPFSIGH.

It belongs to the class-I aminoacyl-tRNA synthetase family. As to quaternary structure, monomer.

It localises to the cytoplasm. It carries out the reaction tRNA(Arg) + L-arginine + ATP = L-arginyl-tRNA(Arg) + AMP + diphosphate. This chain is Arginine--tRNA ligase, found in Streptococcus pyogenes serotype M4 (strain MGAS10750).